Here is a 273-residue protein sequence, read N- to C-terminus: Undecaprenyl-diphosphatase (273 aa).

A run of 7 helical transmembrane segments spans residues 6 to 26, 45 to 65, 90 to 110, 116 to 136, 190 to 210, 222 to 242, and 252 to 272; these read SLLIAAILGVVEGLTEFLPVS, AKTFEVVIQLGSILAVVVMFW, LTLIHILLGMIPAVVLGLVFH, LFNPINVMYALVVGGLLLIAA, YAASEFSFLLAVPMMMGATVL, ADIPMFAVGFVTAFVVALIAI, and ISFIPFAIYRFVVAAAVYVVF.

It belongs to the UppP family.

The protein resides in the cell inner membrane. The catalysed reaction is di-trans,octa-cis-undecaprenyl diphosphate + H2O = di-trans,octa-cis-undecaprenyl phosphate + phosphate + H(+). In terms of biological role, catalyzes the dephosphorylation of undecaprenyl diphosphate (UPP). Confers resistance to bacitracin. The protein is Undecaprenyl-diphosphatase of Salmonella heidelberg (strain SL476).